A 233-amino-acid polypeptide reads, in one-letter code: Phosphoribosylformylglycinamidine synthase subunit PurQ (233 aa).

The region spanning 3–233 is the Glutamine amidotransferase type-1 domain; that stretch reads SAVLVFPGIN…GLVEHLKTAA (231 aa). Catalysis depends on C87, which acts as the Nucleophile. Residues H204 and E206 contribute to the active site.

In terms of assembly, part of the FGAM synthase complex composed of 1 PurL, 1 PurQ and 2 PurS subunits.

The protein resides in the cytoplasm. It carries out the reaction N(2)-formyl-N(1)-(5-phospho-beta-D-ribosyl)glycinamide + L-glutamine + ATP + H2O = 2-formamido-N(1)-(5-O-phospho-beta-D-ribosyl)acetamidine + L-glutamate + ADP + phosphate + H(+). The catalysed reaction is L-glutamine + H2O = L-glutamate + NH4(+). It functions in the pathway purine metabolism; IMP biosynthesis via de novo pathway; 5-amino-1-(5-phospho-D-ribosyl)imidazole from N(2)-formyl-N(1)-(5-phospho-D-ribosyl)glycinamide: step 1/2. In terms of biological role, part of the phosphoribosylformylglycinamidine synthase complex involved in the purines biosynthetic pathway. Catalyzes the ATP-dependent conversion of formylglycinamide ribonucleotide (FGAR) and glutamine to yield formylglycinamidine ribonucleotide (FGAM) and glutamate. The FGAM synthase complex is composed of three subunits. PurQ produces an ammonia molecule by converting glutamine to glutamate. PurL transfers the ammonia molecule to FGAR to form FGAM in an ATP-dependent manner. PurS interacts with PurQ and PurL and is thought to assist in the transfer of the ammonia molecule from PurQ to PurL. The polypeptide is Phosphoribosylformylglycinamidine synthase subunit PurQ (Rhodopseudomonas palustris (strain HaA2)).